A 147-amino-acid chain; its full sequence is UPF0306 protein YhbP (147 aa).

It belongs to the UPF0306 family.

The chain is UPF0306 protein YhbP from Escherichia coli (strain SMS-3-5 / SECEC).